We begin with the raw amino-acid sequence, 437 residues long: Protein PhoH2 (437 aa).

The PINc domain occupies 7 to 134 (RTYVLDTSVL…LVSKDIPLRV (128 aa)).

The protein in the N-terminal section; belongs to the PINc/VapC protein family. This sequence in the C-terminal section; belongs to the PhoH family. Interacts with antitoxin PhoAT. Mg(2+) is required as a cofactor.

The catalysed reaction is n ATP + n H2O + wound RNA = n ADP + n phosphate + unwound RNA.. It catalyses the reaction ATP + H2O = ADP + phosphate + H(+). It carries out the reaction GTP + H2O = GDP + phosphate + H(+). In terms of biological role, toxic component of a type II toxin-antitoxin (TA) system. The possible cognate antitoxin is PhoAT; the toxin gene can be expressed in the absence of the antitoxin gene in an endogenous mc(2)155 double deletion. Unwinds and/or cleaves 5'-tailed RNA in vitro that starts with 5'-AC, the reaction requires hydrolyzable ATP; double-stranded (ds)RNA and dsDNA are not unwound or cleaved. Has ATPase and GTPase activities. This is Protein PhoH2 from Mycolicibacterium smegmatis (strain ATCC 700084 / mc(2)155) (Mycobacterium smegmatis).